Reading from the N-terminus, the 366-residue chain is Zinc finger CCCH domain-containing protein 11 (366 aa).

The interval 43-66 is disordered; it reads LHQAVQPKPDPTKTAAKKKKEEEK. Positions 54 to 79 form a coiled coil; that stretch reads TKTAAKKKKEEEKAREKELNDLFKVA. 2 C3H1-type zinc fingers span residues 90–117 and 160–198; these read DPKSIVCEFFKVGQCQKGFKCKFSHDLN and KPTDIVCKYFLDAVEKKQYGWFWVCPNGGKDCHYRHALP. Positions 208–234 form a coiled coil; sequence KALLEEESEKIAIEDEIEDQRKKVKTT. The segment at 293–338 is disordered; sequence YERQEESEANEEPSNKNQDEGPSSSTSNGKEVEESDDEDINIDDDL. Polar residues predominate over residues 312-321; that stretch reads EGPSSSTSNG. The span at 325 to 338 shows a compositional bias: acidic residues; the sequence is EESDDEDINIDDDL.

The polypeptide is Zinc finger CCCH domain-containing protein 11 (Oryza sativa subsp. japonica (Rice)).